Consider the following 285-residue polypeptide: (3S)-malyl-CoA thioesterase (285 aa).

Residues arginine 70 and glutamate 122 each coordinate substrate. Mg(2+)-binding residues include glutamate 122 and aspartate 148.

The protein belongs to the HpcH/HpaI aldolase family. In terms of assembly, homodimer or homotrimer. Mg(2+) is required as a cofactor.

It catalyses the reaction (S)-malyl-CoA + H2O = (S)-malate + CoA + H(+). Functionally, catalyzes the hydrolysis of (3S)-malyl-CoA to (3S)-malate and free CoA. Inactive towards beta-methylmalyl-CoA and other CoA esters. The sequence is that of (3S)-malyl-CoA thioesterase from Cereibacter sphaeroides (strain ATCC 17025 / ATH 2.4.3) (Rhodobacter sphaeroides).